The sequence spans 313 residues: N-acetyl-gamma-glutamyl-phosphate reductase (313 aa).

Cysteine 117 is a catalytic residue.

The protein belongs to the NAGSA dehydrogenase family. Type 2 subfamily.

The protein resides in the cytoplasm. It catalyses the reaction N-acetyl-L-glutamate 5-semialdehyde + phosphate + NADP(+) = N-acetyl-L-glutamyl 5-phosphate + NADPH + H(+). It participates in amino-acid biosynthesis; L-arginine biosynthesis; N(2)-acetyl-L-ornithine from L-glutamate: step 3/4. In terms of biological role, catalyzes the NADPH-dependent reduction of N-acetyl-5-glutamyl phosphate to yield N-acetyl-L-glutamate 5-semialdehyde. The chain is N-acetyl-gamma-glutamyl-phosphate reductase from Burkholderia orbicola (strain MC0-3).